We begin with the raw amino-acid sequence, 248 residues long: Inner membrane protein pE248R (248 aa).

Glycine 2 carries N-myristoyl glycine; by host lipidation. The Cytoplasmic portion of the chain corresponds to 2 to 199; the sequence is GGSTSKNSFK…ADAISAVFKN (198 aa). Residues 200 to 220 traverse the membrane as a helical segment; the sequence is IMVAAVVIVLIIVGFIAVFYF. Residues 221 to 248 are Extracellular-facing; the sequence is LHSRHRHEEEEEAEPLISNKVLKNAAVS.

It belongs to the asfivirus E248R family. Interacts with A151R.

The protein resides in the host membrane. Its subcellular location is the virion membrane. Essential for viral fusion with host endosomal membrane and core release. The protein is Inner membrane protein pE248R of Ornithodoros (relapsing fever ticks).